A 169-amino-acid chain; its full sequence is Putative phosphoesterase SACOL1020 (169 aa).

Residue His-34 is the Proton donor of the active site. 2 consecutive short sequence motifs (HXTX) follow at residues 34 to 37 (HVTI) and 115 to 118 (HFTI). His-115 functions as the Proton acceptor in the catalytic mechanism.

It belongs to the 2H phosphoesterase superfamily. YjcG family.

The chain is Putative phosphoesterase SACOL1020 from Staphylococcus aureus (strain COL).